Reading from the N-terminus, the 666-residue chain is MSSFLVQTAVVRLFLLGVVFWFPFALSSSCAEIASKFGTWKSEGDAPPSYLSPTVDLLDGLDRIRKKIINGTISSQYDFDNLLHRLISQANDGHLQIGLCSREIFRFQHGTPLTSVSREGLDLPQLYVHSDAVIMHSGQVEAISPVVEINGLEADYYLQSRIAVTLGYQDPDARYNALFPSPSAGFTGTYSAGAWASNSGEWPGSAVLTIRFANGTRLEVKPTATWPATNGPMNYTDGQALFEAACLPGTSSKYIFGSFPGMYLGLPAYELPRSGPSVFPAPTIKDSNGLVRLYSLEDAALQDVAVLQITSFRIGGEDSREFSATIRQSLDWASSHGKTKLLLDLSGNEGGNVIPGFDLFRMLFPDEPIRSETRFRSTELLDVLGQAFSAEYRGADAKEILDPPLAAQNAVSPDQEENVFGSWKDLFGPDPNYEGDSMSNAYAVFSFAAASTTFEPISGYGSAPLAIKTRLFEPQSIAVVTDGRCASTCAIVVGLLQAQGVRTVTFGGRPRKAPMQAVGGVKGGQRWSLRTISRHIKTARELLAKQYTSTAAQANSTRRLAVGHLLQKLNDLAPPALPLIPRMEDNEWEFALRFDTYGQSSVNFRDAYVPANETTPWQFIYEAADCRMFLTPENVVDPASRWNSAARAMFGGREMGSEKCVDYVSV.

A signal peptide spans 1–27 (MSSFLVQTAVVRLFLLGVVFWFPFALS). N70, N214, and N234 each carry an N-linked (GlcNAc...) asparagine glycan. The peptidase S41 domain stretch occupies residues 303 to 504 (DVAVLQITSF…LLQAQGVRTV (202 aa)). N-linked (GlcNAc...) asparagine glycans are attached at residues N555 and N612.

This sequence belongs to the peptidase S41A family.

It functions in the pathway mycotoxin biosynthesis. In terms of biological role, peptidase S41 family protein; part of the gene cluster that mediates the biosynthesis of the phomopsins, a group of hexapeptide mycotoxins which infects lupins and causes lupinosis disease in livestock. Within the pathway, phomP1 and phomP1' are probably involved in the processing of the phomA and phomA' precursors. The pathway starts with the processing of the precursor phomA by several endopeptidases including kexin proteases as well as the cluster-specific S41 family peptidase phomP1 and the oligopeptidase phomG to produce 10 identical copies of the hexapeptide Tyr-Val-Ile-Pro-Ile-Asp. After being excised from the precursor peptide, the core peptides are cyclized and modified post-translationally by enzymes encoded within the gene cluster. The timing and order of proteolysis of the phomA precursor and PTMs are still unknown. Two tyrosinase-like enzymes, phomQ1 and phomQ2, catalyze the chlorination and hydroxylation of Tyr, respectively. PhomYb, is proposed to be involved in the construction of the macrocyclic structure. The other 4 ustYa family proteins may be involved in PTMs that generate the unique structure of phomopsin A. PhomYa is required for the hydroxylation of C-beta of Tyr. PhomYc, phomYd, and phomYe are responsible for the biosynthesis of 2,3-dehydroisoleucine (dIle), 2,3-dehydroaspartic acid (dAsp), and 3,4-dehydroproline (dPro), respectively. While dIle formation by phomYc is indispensable for the installation of dAsp by phomYd, the order of the other PTMs have not been elucidated yet. Most of the biosynthetic enzymes likely have broad substrate specificity, and thus, there might be a metabolic grid from a precursor to phomopsin A. The enzyme(s) responsible for the biosynthesis of 3,4-dehydrovaline (dVal) have also not been identified yet. Finally, phomM acts as an S-adenosylmethionine-dependent alpha-N-methyltransferase that catalyzes two successive N-methylation reactions, converting N-desmethyl-phomopsin A to phomopsin A and phomopsin A further to an N,N-dimethylated congener called phomopsin E. The chain is Peptidase S41 family protein phomP1 from Diaporthe leptostromiformis (Lupinosis disease fungus).